The chain runs to 441 residues: Baicalein 7-O-glucuronosyltransferase (441 aa).

Belongs to the UDP-glycosyltransferase family. As to quaternary structure, homodimer.

It catalyses the reaction baicalein + UDP-alpha-D-glucuronate = baicalin + UDP. Its activity is regulated as follows. Inhibited by copper, zinc and iron, p-Chloromercuri-benzoic acid (PCMBA) and 4,4'-diisothiocyanostilbene-2,2'-disulfonic acid (DIDS), but not by N-ethylmaleimide (NEM), dithioerythritol (DTE), calcium or magnesium. Its function is as follows. Involved in the production of glucuronosylated baicalein, a flavonoid that shows antiallergic, anti-HIV and antitumor activities. Can use baicalein, scutellarein and wogonin as substrates, but not chrysin, apigenin, luteolin, quercetin, formononetin and daidzein. Highly specific for UDP-glucuronate (UDP-GlcUA) and no activity with UDP-glucose or UDP-galacturonic acid. This chain is Baicalein 7-O-glucuronosyltransferase (UBGAT-I), found in Scutellaria baicalensis (Baical skullcap).